Here is a 129-residue protein sequence, read N- to C-terminus: Serum amyloid A-2 protein (129 aa).

Residues 1–18 (MKLFTGLIFCSLVLGVHS) form the signal peptide. Gln-19 is modified (pyrrolidone carboxylic acid). The segment covering 90-103 (KHGDSGHGVEDSRA) has biased composition (basic and acidic residues). A disordered region spans residues 90–129 (KHGDSGHGVEDSRADQAANEWGRSGKDPNHFRPPGLPDKY).

Belongs to the SAA family. In terms of assembly, apolipoprotein of the HDL complex.

It localises to the secreted. Major acute phase reactant. This Sus scrofa (Pig) protein is Serum amyloid A-2 protein.